The chain runs to 1036 residues: Beta-galactosidase (1036 aa).

Substrate contacts are provided by asparagine 97 and aspartate 197. Residue aspartate 197 participates in Na(+) binding. Glutamate 411, histidine 413, and glutamate 456 together coordinate Mg(2+). Substrate-binding positions include glutamate 456 and 532–535 (EYAH). Glutamate 456 acts as the Proton donor in catalysis. Glutamate 532 (nucleophile) is an active-site residue. Asparagine 592 is a Mg(2+) binding site. 2 residues coordinate Na(+): phenylalanine 596 and aspartate 599. Substrate is bound by residues aspartate 599 and tryptophan 1006.

The protein belongs to the glycosyl hydrolase 2 family. Homotetramer. Mg(2+) serves as cofactor. It depends on Na(+) as a cofactor.

The enzyme catalyses Hydrolysis of terminal non-reducing beta-D-galactose residues in beta-D-galactosides.. This is Beta-galactosidase from Leuconostoc mesenteroides subsp. mesenteroides (strain ATCC 8293 / DSM 20343 / BCRC 11652 / CCM 1803 / JCM 6124 / NCDO 523 / NBRC 100496 / NCIMB 8023 / NCTC 12954 / NRRL B-1118 / 37Y).